The primary structure comprises 153 residues: Pheromone-binding protein Gp-9 (153 aa).

Positions 1-19 (MKTFVLHIFIFALVAFASA) are cleaved as a signal peptide. 3 disulfides stabilise this stretch: Cys-37–Cys-77, Cys-73–Cys-129, and Cys-118–Cys-138.

Belongs to the PBP/GOBP family. As to quaternary structure, homodimer.

It is found in the secreted. Colony queen number, a major feature of social organization, is associated with worker genotype for Gp-9. Colonies are headed by either a single reproductive queen (monogyne form) or multiple queens (polygyne form). Differences in worker Gp-9 genotypes between social forms may cause differences in workers' abilities to recognize queens and regulate their numbers. This Solenopsis pusillignis (Fire ant) protein is Pheromone-binding protein Gp-9.